A 252-amino-acid chain; its full sequence is MQKLVLGVEYDGSMYCGWQKQKCVSSIQSCLEYALSKVSSESILVFCGGRTDSGVHALEQIVHFETQLKCSRSAWTLGVNCHLPNDICVRWVSEVDNSFHARFSAISRRYCYFIYNNRIRSAVFCKRVWSYSRFLDVNKMSKAAQYLLGENDFSVFRSSGSQSCSTNRNIYHLRVIRQGHYVVIDIRANAFLYRMVRNIVGSLVEVGCGNKPVTWILELLKNYRGSLNRITAPASGLYLVEIKYPRYYLFQK.

D52 functions as the Nucleophile in the catalytic mechanism. Y110 contacts substrate.

The protein belongs to the tRNA pseudouridine synthase TruA family. In terms of assembly, homodimer.

It catalyses the reaction uridine(38/39/40) in tRNA = pseudouridine(38/39/40) in tRNA. Formation of pseudouridine at positions 38, 39 and 40 in the anticodon stem and loop of transfer RNAs. This chain is tRNA pseudouridine synthase A, found in Blochmanniella floridana.